Reading from the N-terminus, the 685-residue chain is E3 ubiquitin ligase Rnf157 (685 aa).

A lipid anchor (N-myristoyl glycine) is attached at Gly2. An RING-type zinc finger spans residues 276-315 (ECVVCLSDVRDTLILPCRHLCLCNTCADTLRYQANNCPIC). Positions 329–332 (RKKL) match the D-box 1 motif. 3 disordered regions span residues 339 to 361 (SFNPIISSQTSDSEEHSSSENIP), 433 to 584 (LSKS…AGEQ), and 650 to 672 (LGGRRPSARPRSPRGGLGKEASA). The span at 434–443 (SKSISQNSSV) shows a compositional bias: low complexity. The segment covering 478–537 (ESENLTLSSSGAVDQSSCTGTPLSSTISSPEDPASSSLAQSVMSMASSQISTDTVSSMSG) has biased composition (polar residues). Residues 552 to 561 (PSPRAASRAP) show a composition bias toward low complexity. The D-box 2 motif lies at 657–660 (ARPR).

Interacts with APBB1. Interacts with CHD1; CHD1-binding controls RNF157 stability. Also interacts with ATRN, MEGF8, TECR, MSI2, PLRG1, BYSL, MTERF3, PSMA1, MRPS18B, PRPF4, FASTKD2, SLC25A1, SMU1, CNOT9, MRPS2, MAGT1, FXR2, EMD, PSMD8, HDAC1, RAN, HSD17B12, TXNDC5 and MRPL19.

It localises to the cytoplasm. It catalyses the reaction S-ubiquitinyl-[E2 ubiquitin-conjugating enzyme]-L-cysteine + [acceptor protein]-L-lysine = [E2 ubiquitin-conjugating enzyme]-L-cysteine + N(6)-ubiquitinyl-[acceptor protein]-L-lysine.. Functionally, E3 ubiquitin ligase that ubiquitinates APBB1 for its degradation by the proteasome and thus prevents apoptosis and promotes survival of neurons. Has a dual role in neurons as it is also required for dendrite growth and maintenance for which its ligase activity is not critical. May act as a scaffold molecule to regulate this process. Acts as a downstream effector of the interconnected PI3K and MAPK signaling pathways and thus participates in the regulation of the cell cycle. The chain is E3 ubiquitin ligase Rnf157 (Rnf157) from Mus musculus (Mouse).